The sequence spans 614 residues: Dihydroxy-acid dehydratase (614 aa).

Residue Asp-81 coordinates Mg(2+). Residue Cys-122 participates in [2Fe-2S] cluster binding. Mg(2+)-binding residues include Asp-123 and Lys-124. Lys-124 is subject to N6-carboxylysine. Cys-193 serves as a coordination point for [2Fe-2S] cluster. Position 489 (Glu-489) interacts with Mg(2+). The active-site Proton acceptor is Ser-515.

It belongs to the IlvD/Edd family. As to quaternary structure, homodimer. It depends on [2Fe-2S] cluster as a cofactor. Requires Mg(2+) as cofactor.

The catalysed reaction is (2R)-2,3-dihydroxy-3-methylbutanoate = 3-methyl-2-oxobutanoate + H2O. It carries out the reaction (2R,3R)-2,3-dihydroxy-3-methylpentanoate = (S)-3-methyl-2-oxopentanoate + H2O. Its pathway is amino-acid biosynthesis; L-isoleucine biosynthesis; L-isoleucine from 2-oxobutanoate: step 3/4. It functions in the pathway amino-acid biosynthesis; L-valine biosynthesis; L-valine from pyruvate: step 3/4. Functionally, functions in the biosynthesis of branched-chain amino acids. Catalyzes the dehydration of (2R,3R)-2,3-dihydroxy-3-methylpentanoate (2,3-dihydroxy-3-methylvalerate) into 2-oxo-3-methylpentanoate (2-oxo-3-methylvalerate) and of (2R)-2,3-dihydroxy-3-methylbutanoate (2,3-dihydroxyisovalerate) into 2-oxo-3-methylbutanoate (2-oxoisovalerate), the penultimate precursor to L-isoleucine and L-valine, respectively. The protein is Dihydroxy-acid dehydratase of Cellvibrio japonicus (strain Ueda107) (Pseudomonas fluorescens subsp. cellulosa).